Here is a 373-residue protein sequence, read N- to C-terminus: RNA 3'-terminal phosphate cyclase-like protein (373 aa).

It belongs to the RNA 3'-terminal cyclase family. Type 2 subfamily. Part of the small subunit (SSU) processome, composed of more than 70 proteins and the RNA chaperone small nucleolar RNA (snoRNA) U3. Interacts with BMS1.

It is found in the nucleus. Its subcellular location is the nucleolus. In terms of biological role, as part of the small subunit (SSU) processome, it plays a role in 40S-ribosomal-subunit biogenesis in the early pre-rRNA processing steps at sites A0, A1 and A2 that are required for proper maturation of the 18S RNA. Activates BMS1 by promoting GDP/GTP exchange. Does not have cyclase activity. The polypeptide is RNA 3'-terminal phosphate cyclase-like protein (Homo sapiens (Human)).